The sequence spans 322 residues: Putative DNA-directed RNA polymerase subunit alpha-like 2 (322 aa).

Residues 1–232 are alpha N-terminal domain (alpha-NTD); the sequence is MSNPNNGAEW…GLLSLVFQAE (232 aa). Residues 280-322 are alpha C-terminal domain (alpha-CTD); the sequence is EGPVTDEEGDSIDPTFTPVQKWDITMNSYQYSGETFQGLLSRF.

Belongs to the RNA polymerase alpha chain family. In plastids the minimal PEP RNA polymerase catalytic core is composed of four subunits: alpha, beta, beta', and beta''. When a (nuclear-encoded) sigma factor is associated with the core the holoenzyme is formed, which can initiate transcription.

It is found in the plastid. It localises to the chloroplast. The catalysed reaction is RNA(n) + a ribonucleoside 5'-triphosphate = RNA(n+1) + diphosphate. In terms of biological role, DNA-dependent RNA polymerase catalyzes the transcription of DNA into RNA using the four ribonucleoside triphosphates as substrates. The protein is Putative DNA-directed RNA polymerase subunit alpha-like 2 (rpoAL2-A) of Pelargonium hortorum (Common geranium).